The primary structure comprises 572 residues: Beta-fructofuranosidase, insoluble isoenzyme CWINV5 (572 aa).

Residues 1–23 (MANIVWCNIAMFLLVSLFLTDDA) form the signal peptide. Substrate contacts are provided by residues 54–57 (WMND) and Gln73. Asp57 is a catalytic residue. N-linked (GlcNAc...) asparagine glycosylation is present at Asn84. 118–119 (WS) contributes to the substrate binding site. N-linked (GlcNAc...) asparagine glycosylation is found at Asn152 and Asn179. Residues 184–185 (RD) and Glu239 each bind substrate. N-linked (GlcNAc...) asparagine glycosylation is found at Asn333 and Asn438. The cysteines at positions 434 and 481 are disulfide-linked.

It belongs to the glycosyl hydrolase 32 family. Expressed in flowers, and, to a lower extent, in leaves.

The protein resides in the secreted. Its subcellular location is the extracellular space. It is found in the apoplast. It localises to the cell wall. It catalyses the reaction Hydrolysis of terminal non-reducing beta-D-fructofuranoside residues in beta-D-fructofuranosides.. The polypeptide is Beta-fructofuranosidase, insoluble isoenzyme CWINV5 (CWINV5) (Arabidopsis thaliana (Mouse-ear cress)).